The sequence spans 488 residues: MGALHRAHGQLIKSVQGFGSLQPAAVLVSVFVNPLQFGPAEDFDSYPRDLEADCELASRSGASALWAPSVDQVFPGGASSQFRIQVPSHLQAHLCGAIRPGHFDGVVTVVARLLALVRPEVLVLGEKDWQQLVILRHLVAQLGLPVRVHGVATVRDDDGLACSSRNRYLMTQQRQQALALPQLLARAARESQDGRAVDLAGLRCAWEQLGLEVEYVETVDAFNLQPLHAGRKLCLLAAAVRCGETRLIDHTFLMSRQPIVAIDGPAGAGKSTVTRAFAERLGLLYLDTGAMYRAVTWLTQQHDVDPHDPVAVKTILENLELELEPSQSGPQKVRINGHDVTEAIRSPEVTSSVSVVAAHGCVRKALTAQQQRMGVRGGLVAEGRDIGTAVFPDAELKVFLTASPAERARRRALDLDNRGFPVPDLAELETQIEERDRMDSTREVAPLRQAEDATELISDGMSIEEVIETLIDLFRVQVPEEVWPTPGS.

1–8 (MGALHRAH) contacts ATP. Residues 1–251 (MGALHRAHGQ…CGETRLIDHT (251 aa)) form a pantoate--beta-alanine ligase region. His8 serves as the catalytic Proton donor. Gln36 contacts (R)-pantoate. Gln36 provides a ligand contact to beta-alanine. 125–128 (GEKD) lines the ATP pocket. Gln131 contacts (R)-pantoate. Residues Val154 and 162–165 (CSSR) contribute to the ATP site. The interval 252–488 (FLMSRQPIVA…PEEVWPTPGS (237 aa)) is cytidylate kinase.

This sequence in the N-terminal section; belongs to the pantothenate synthetase family. In the C-terminal section; belongs to the cytidylate kinase family. Type 1 subfamily.

It is found in the cytoplasm. It catalyses the reaction (R)-pantoate + beta-alanine + ATP = (R)-pantothenate + AMP + diphosphate + H(+). It carries out the reaction CMP + ATP = CDP + ADP. The enzyme catalyses dCMP + ATP = dCDP + ADP. It participates in cofactor biosynthesis; (R)-pantothenate biosynthesis; (R)-pantothenate from (R)-pantoate and beta-alanine: step 1/1. Its function is as follows. Catalyzes the condensation of pantoate with beta-alanine in an ATP-dependent reaction via a pantoyl-adenylate intermediate. Catalyzes the transfer of a phosphate group from ATP to either CMP or dCMP to form CDP or dCDP and ADP, respectively. This chain is Bifunctional pantoate ligase/cytidylate kinase, found in Prochlorococcus marinus (strain MIT 9303).